Reading from the N-terminus, the 361-residue chain is Phospho-N-acetylmuramoyl-pentapeptide-transferase (361 aa).

10 helical membrane passes run 27–47, 70–90, 97–117, 134–154, 167–187, 199–219, 236–256, 263–283, 288–308, and 338–358; these read ILAS…MIRW, GTPT…CLLW, SLWL…VDDY, YFWQ…NASL, TVTW…IVGS, GLAI…AYAS, TGEL…FLWY, VFMG…VAVV, LVLL…ILQV, and KVIV…LATL.

It belongs to the glycosyltransferase 4 family. MraY subfamily. It depends on Mg(2+) as a cofactor.

Its subcellular location is the cell inner membrane. The catalysed reaction is UDP-N-acetyl-alpha-D-muramoyl-L-alanyl-gamma-D-glutamyl-meso-2,6-diaminopimeloyl-D-alanyl-D-alanine + di-trans,octa-cis-undecaprenyl phosphate = di-trans,octa-cis-undecaprenyl diphospho-N-acetyl-alpha-D-muramoyl-L-alanyl-D-glutamyl-meso-2,6-diaminopimeloyl-D-alanyl-D-alanine + UMP. It participates in cell wall biogenesis; peptidoglycan biosynthesis. Catalyzes the initial step of the lipid cycle reactions in the biosynthesis of the cell wall peptidoglycan: transfers peptidoglycan precursor phospho-MurNAc-pentapeptide from UDP-MurNAc-pentapeptide onto the lipid carrier undecaprenyl phosphate, yielding undecaprenyl-pyrophosphoryl-MurNAc-pentapeptide, known as lipid I. This is Phospho-N-acetylmuramoyl-pentapeptide-transferase from Legionella pneumophila (strain Lens).